A 277-amino-acid chain; its full sequence is Ribosomal RNA small subunit methyltransferase A (277 aa).

S-adenosyl-L-methionine contacts are provided by Asn-24, Leu-26, Gly-51, Glu-72, Asp-96, and Asn-123.

It belongs to the class I-like SAM-binding methyltransferase superfamily. rRNA adenine N(6)-methyltransferase family. RsmA subfamily.

The protein resides in the cytoplasm. It carries out the reaction adenosine(1518)/adenosine(1519) in 16S rRNA + 4 S-adenosyl-L-methionine = N(6)-dimethyladenosine(1518)/N(6)-dimethyladenosine(1519) in 16S rRNA + 4 S-adenosyl-L-homocysteine + 4 H(+). In terms of biological role, specifically dimethylates two adjacent adenosines (A1518 and A1519) in the loop of a conserved hairpin near the 3'-end of 16S rRNA in the 30S particle. May play a critical role in biogenesis of 30S subunits. The protein is Ribosomal RNA small subunit methyltransferase A of Ureaplasma parvum serovar 3 (strain ATCC 27815 / 27 / NCTC 11736).